We begin with the raw amino-acid sequence, 308 residues long: Probable GTP 3',8-cyclase (308 aa).

The Radical SAM core domain occupies 4 to 224 (RFGRPLEDLR…QIRKKHFRPR (221 aa)). Arginine 13 is a GTP binding site. [4Fe-4S] cluster-binding residues include cysteine 20, cysteine 24, and cysteine 27. GTP is bound at residue lysine 60. Glycine 64 provides a ligand contact to S-adenosyl-L-methionine. Residue threonine 90 coordinates GTP. Serine 114 contacts S-adenosyl-L-methionine. Lysine 151 serves as a coordination point for GTP. Residues cysteine 245 and cysteine 248 each coordinate [4Fe-4S] cluster. 250-252 (RIR) is a GTP binding site. Cysteine 262 is a binding site for [4Fe-4S] cluster.

It belongs to the radical SAM superfamily. MoaA family. The cofactor is [4Fe-4S] cluster.

It carries out the reaction GTP + AH2 + S-adenosyl-L-methionine = (8S)-3',8-cyclo-7,8-dihydroguanosine 5'-triphosphate + 5'-deoxyadenosine + L-methionine + A + H(+). It participates in cofactor biosynthesis; molybdopterin biosynthesis. Catalyzes the cyclization of GTP to (8S)-3',8-cyclo-7,8-dihydroguanosine 5'-triphosphate. The protein is Probable GTP 3',8-cyclase of Saccharolobus islandicus (strain Y.N.15.51 / Yellowstone #2) (Sulfolobus islandicus).